The sequence spans 409 residues: AP-1-like transcription factor YAP2 (409 aa).

Short sequence motifs (bipartite nuclear localization signal) lie at residues 17-24 (MKKQMLLN) and 47-54 (SRRTAQNR). Residues 26 to 64 (DGTPKRKVGRPGRKRIDSEAKSRRTAQNRAAQRAFRDRK) are disordered. Positions 43 to 106 (SEAKSRRTAQ…KSLLSEITKY (64 aa)) constitute a bZIP domain. The segment at 46 to 69 (KSRRTAQNRAAQRAFRDRKEAKMK) is basic motif. Residues 71–99 (LQERVELLEQKDAQNKTTTDFLLCSLKSL) form a leucine-zipper region. The segment at 127 to 156 (QKRENEKGTSTAVSKAAKELPSPNSDENMT) is disordered. Residues 356–387 (CYHILEEISSLPKYSSLDIDDLCSELIIKAKC) are c-CRD. Positions 372–379 (LDIDDLCS) match the Nuclear export signal motif.

The protein belongs to the bZIP family. YAP subfamily. As to quaternary structure, homodimer; disulfide-linked, upon oxidation. Interacts in the nucleus with the nuclear export protein CRM1. Interacts with RCK1. Depending on the oxidative stress inducing agent, CAD1/YAP2 can undergo two distinct conformational changes, both through oxidation of cysteine residues, and both masking the nuclear export signal, thus abolishing nuclear export by CRM1/exportin 1. Peroxide stress induces the formation of possible intramolecular disulfide bonds as well as intermolcular disulfide within a homodimer. Cadmium may bind directly to specific cysteine residues (Cys-391 and either Cys-356 or Cys-387) in the c-CRD.

Its subcellular location is the cytoplasm. It localises to the nucleus. In terms of biological role, transcription activator involved in oxidative stress response and cadmium resistance. Regulates the transcription of genes overrepresented for the function of stabilizing proteins including the inducible Hsp90-family protein HSP82. Preferentially binds to promoters with the core binding site 5'-TTA[CG]TAA-3'. Activity of the transcription factor is controlled through oxidation of specific cysteine residues resulting in the alteration of its subcellular location. Activation by alkyl hydroperoxides or cadmium induces nuclear accumulation and as a result CAD1/YAP2 transcriptional activity. The protein is AP-1-like transcription factor YAP2 of Saccharomyces cerevisiae (strain ATCC 204508 / S288c) (Baker's yeast).